A 297-amino-acid chain; its full sequence is UDP-N-acetylenolpyruvoylglucosamine reductase (297 aa).

The 166-residue stretch at 26–191 (QTGGPAEYLA…IAATFALKAG (166 aa)) folds into the FAD-binding PCMH-type domain. R170 is an active-site residue. Catalysis depends on S220, which acts as the Proton donor. The active site involves E290.

It belongs to the MurB family. It depends on FAD as a cofactor.

It localises to the cytoplasm. The enzyme catalyses UDP-N-acetyl-alpha-D-muramate + NADP(+) = UDP-N-acetyl-3-O-(1-carboxyvinyl)-alpha-D-glucosamine + NADPH + H(+). It functions in the pathway cell wall biogenesis; peptidoglycan biosynthesis. Functionally, cell wall formation. This chain is UDP-N-acetylenolpyruvoylglucosamine reductase, found in Lactobacillus delbrueckii subsp. bulgaricus (strain ATCC 11842 / DSM 20081 / BCRC 10696 / JCM 1002 / NBRC 13953 / NCIMB 11778 / NCTC 12712 / WDCM 00102 / Lb 14).